Reading from the N-terminus, the 224-residue chain is ATP-dependent dethiobiotin synthetase BioD (224 aa).

Position 14 to 19 (14 to 19) interacts with ATP; sequence GIGKTV. Thr-18 serves as a coordination point for Mg(2+). The active site involves Lys-39. Position 43 (Ser-43) interacts with substrate. Residues Asp-56, 117–120, and 177–178 contribute to the ATP site; these read EGVG and NE. Mg(2+) is bound by residues Asp-56 and Glu-117.

This sequence belongs to the dethiobiotin synthetase family. Homodimer. It depends on Mg(2+) as a cofactor.

The protein localises to the cytoplasm. It carries out the reaction (7R,8S)-7,8-diammoniononanoate + CO2 + ATP = (4R,5S)-dethiobiotin + ADP + phosphate + 3 H(+). It participates in cofactor biosynthesis; biotin biosynthesis; biotin from 7,8-diaminononanoate: step 1/2. Functionally, catalyzes a mechanistically unusual reaction, the ATP-dependent insertion of CO2 between the N7 and N8 nitrogen atoms of 7,8-diaminopelargonic acid (DAPA, also called 7,8-diammoniononanoate) to form a ureido ring. The chain is ATP-dependent dethiobiotin synthetase BioD from Xanthomonas campestris pv. campestris (strain ATCC 33913 / DSM 3586 / NCPPB 528 / LMG 568 / P 25).